The sequence spans 567 residues: Probable transport protein (567 aa).

Basic and acidic residues predominate over residues methionine 1–threonine 30. The tract at residues methionine 1–proline 38 is disordered. The Cytoplasmic segment spans residues methionine 1–arginine 46. A helical membrane pass occupies residues valine 47–valine 67. At tyrosine 68 to glycine 160 the chain is on the extracellular side. The helical transmembrane segment at isoleucine 161–alanine 181 threads the bilayer. At serine 182–serine 189 the chain is on the cytoplasmic side. A helical membrane pass occupies residues phenylalanine 190–alanine 210. Residues aspartate 211–glutamate 212 lie on the Extracellular side of the membrane. Residues phenylalanine 213–alanine 233 form a helical membrane-spanning segment. The Cytoplasmic segment spans residues cysteine 234–threonine 249. Residues isoleucine 250–leucine 270 traverse the membrane as a helical segment. Residues alanine 271–arginine 289 are Extracellular-facing. A helical membrane pass occupies residues methionine 290–valine 310. Residues threonine 311–arginine 341 are Cytoplasmic-facing. The chain crosses the membrane as a helical span at residues leucine 342–asparagine 362. Residues tyrosine 363–threonine 366 are Extracellular-facing. The helical transmembrane segment at isoleucine 367–phenylalanine 387 threads the bilayer. At valine 388–histidine 404 the chain is on the cytoplasmic side. Residues valine 405–valine 425 form a helical membrane-spanning segment. The Extracellular portion of the chain corresponds to tyrosine 426–asparagine 437. Residues glycine 438–cysteine 458 form a helical membrane-spanning segment. The Cytoplasmic portion of the chain corresponds to tyrosine 459–glutamine 480. Residues valine 481–isoleucine 501 form a helical membrane-spanning segment. The Extracellular segment spans residues serine 502–alanine 514. Residues valine 515–leucine 535 traverse the membrane as a helical segment. At histidine 536 to glutamate 567 the chain is on the cytoplasmic side.

It belongs to the major facilitator superfamily. Sugar transporter (TC 2.A.1.1) family.

The protein resides in the membrane. Probable membrane transport protein. This is Probable transport protein (PRO-1) from Leishmania enriettii.